Consider the following 665-residue polypeptide: Zinc finger CCCH domain-containing protein 45 (665 aa).

A disordered region spans residues 1 to 55; sequence MDDGDLSFDFEGGLDQPPAGGGGGPAPHSSDPGGVGGGGGGGGPGDGGGHGRGRG. A compositionally biased stretch (gly residues) spans 33-50; sequence GGVGGGGGGGGPGDGGGH. 3 C3H1-type zinc fingers span residues 58 to 85, 86 to 113, and 114 to 139; these read SYRQ…HQFD, KARM…HSYD, and DVKE…HVKL. The interval 167-256 is disordered; it reads HNNYNQQGER…QATRIATPLP (90 aa). The segment covering 169 to 200 has biased composition (polar residues); that stretch reads NYNQQGERPQHPQGSGLPNQNSIDNTTTTTAQ. The segment covering 205–238 has biased composition (low complexity); the sequence is QQAQTTNQQPPQQQQQQQQQQQQQQKPNTNDQVQ. Polar residues predominate over residues 239 to 250; that stretch reads SVPNGSSNQATR. Positions 260 to 395 constitute a YTH domain; that stretch reads SRYFIVKSCN…FIGEQLASLL (136 aa). A coiled-coil region spans residues 432–459; that stretch reads DIVLFDDNEEEEEEESEEEEEGNGQESQ. A compositionally biased stretch (acidic residues) spans 439–454; the sequence is NEEEEEEESEEEEEGN. 2 disordered regions span residues 439–469 and 561–665; these read NEEE…GMMW and GPLM…SRKR. A compositionally biased stretch (gly residues) spans 561–573; it reads GPLMGGLGMGGPG. The span at 596–623 shows a compositional bias: basic and acidic residues; sequence TKREQRRPGGERGDRYETTSDQGSRGHD.

The chain is Zinc finger CCCH domain-containing protein 45 from Oryza sativa subsp. japonica (Rice).